Reading from the N-terminus, the 231-residue chain is DNA mismatch repair protein MutH (231 aa).

Belongs to the MutH family.

The protein resides in the cytoplasm. Functionally, sequence-specific endonuclease that cleaves unmethylated GATC sequences. It is involved in DNA mismatch repair. This Klebsiella pneumoniae subsp. pneumoniae (strain ATCC 700721 / MGH 78578) protein is DNA mismatch repair protein MutH.